The sequence spans 392 residues: Phosphoglycerate kinase (392 aa).

Residues D21–N23, R36, H59–R62, R114, and R147 contribute to the substrate site. ATP contacts are provided by residues K198, E320, and G346–T349.

Belongs to the phosphoglycerate kinase family. In terms of assembly, monomer.

The protein resides in the cytoplasm. It catalyses the reaction (2R)-3-phosphoglycerate + ATP = (2R)-3-phospho-glyceroyl phosphate + ADP. It functions in the pathway carbohydrate degradation; glycolysis; pyruvate from D-glyceraldehyde 3-phosphate: step 2/5. In Neisseria meningitidis serogroup C (strain 053442), this protein is Phosphoglycerate kinase.